Reading from the N-terminus, the 400-residue chain is Chalcone synthase C2 (400 aa).

Residue cysteine 168 is part of the active site.

It belongs to the thiolase-like superfamily. Chalcone/stilbene synthases family.

The enzyme catalyses (E)-4-coumaroyl-CoA + 3 malonyl-CoA + 3 H(+) = 2',4,4',6'-tetrahydroxychalcone + 3 CO2 + 4 CoA. It participates in secondary metabolite biosynthesis; flavonoid biosynthesis. Functionally, the primary product of this enzyme is 4,2',4',6'-tetrahydroxychalcone (also termed naringenin-chalcone or chalcone) which can under specific conditions spontaneously isomerize into naringenin. In Zea mays (Maize), this protein is Chalcone synthase C2 (C2).